The primary structure comprises 68 residues: Large ribosomal subunit protein uL29 (68 aa).

This sequence belongs to the universal ribosomal protein uL29 family.

The chain is Large ribosomal subunit protein uL29 from Streptococcus pneumoniae (strain JJA).